Here is a 64-residue protein sequence, read N- to C-terminus: H/ACA ribonucleoprotein complex subunit 3 (64 aa).

The protein belongs to the NOP10 family. Component of the box H/ACA small nucleolar ribonucleoprotein (H/ACA snoRNP) complex consisting of Nop60B, Gar1, NPH2 and Nop10, and associated with H/ACA-type snoRNAs.

The protein localises to the nucleus. Its subcellular location is the nucleolus. Component of the box H/ACA small nucleolar ribonucleoprotein (H/ACA snoRNP) complex, which catalyzes pseudouridylation of rRNA. This involves the isomerization of uridine such that the ribose is subsequently attached to C5, instead of the normal N1. Pseudouridine ('psi') residues may serve to stabilize the conformation of rRNAs. Required for ribosome biogenesis. H/ACA snoRNP complex-dependent ribosome biogenesis is important in female germline cell differentiation during oogenesis. This Drosophila melanogaster (Fruit fly) protein is H/ACA ribonucleoprotein complex subunit 3.